A 525-amino-acid chain; its full sequence is Bifunctional purine biosynthesis protein PurH (525 aa).

The MGS-like domain occupies 1-148 (MPSNNLIKNA…KNYKNVIVIV (148 aa)).

Belongs to the PurH family.

The enzyme catalyses (6R)-10-formyltetrahydrofolate + 5-amino-1-(5-phospho-beta-D-ribosyl)imidazole-4-carboxamide = 5-formamido-1-(5-phospho-D-ribosyl)imidazole-4-carboxamide + (6S)-5,6,7,8-tetrahydrofolate. The catalysed reaction is IMP + H2O = 5-formamido-1-(5-phospho-D-ribosyl)imidazole-4-carboxamide. The protein operates within purine metabolism; IMP biosynthesis via de novo pathway; 5-formamido-1-(5-phospho-D-ribosyl)imidazole-4-carboxamide from 5-amino-1-(5-phospho-D-ribosyl)imidazole-4-carboxamide (10-formyl THF route): step 1/1. It participates in purine metabolism; IMP biosynthesis via de novo pathway; IMP from 5-formamido-1-(5-phospho-D-ribosyl)imidazole-4-carboxamide: step 1/1. This Buchnera aphidicola subsp. Acyrthosiphon pisum (strain APS) (Acyrthosiphon pisum symbiotic bacterium) protein is Bifunctional purine biosynthesis protein PurH.